The chain runs to 284 residues: Bifunctional protein FolD (284 aa).

NADP(+)-binding positions include 165-167 (GRS), serine 190, and isoleucine 231.

This sequence belongs to the tetrahydrofolate dehydrogenase/cyclohydrolase family. Homodimer.

It catalyses the reaction (6R)-5,10-methylene-5,6,7,8-tetrahydrofolate + NADP(+) = (6R)-5,10-methenyltetrahydrofolate + NADPH. The enzyme catalyses (6R)-5,10-methenyltetrahydrofolate + H2O = (6R)-10-formyltetrahydrofolate + H(+). Its pathway is one-carbon metabolism; tetrahydrofolate interconversion. Its function is as follows. Catalyzes the oxidation of 5,10-methylenetetrahydrofolate to 5,10-methenyltetrahydrofolate and then the hydrolysis of 5,10-methenyltetrahydrofolate to 10-formyltetrahydrofolate. The polypeptide is Bifunctional protein FolD (Lysinibacillus sphaericus (strain C3-41)).